Reading from the N-terminus, the 86-residue chain is MSVRIRLKRMGAKKRPYYRIVVMNSASPRDGRAIEELGYYHPVEKQKQIKIKEDRMKDWISKGAILSDTVKMLLNKNNLNAKSQEV.

Belongs to the bacterial ribosomal protein bS16 family.

The chain is Small ribosomal subunit protein bS16 from Borrelia garinii subsp. bavariensis (strain ATCC BAA-2496 / DSM 23469 / PBi) (Borreliella bavariensis).